A 362-amino-acid chain; its full sequence is Cobalt-precorrin-5B C(1)-methyltransferase (362 aa).

The protein belongs to the CbiD family.

The enzyme catalyses Co-precorrin-5B + S-adenosyl-L-methionine = Co-precorrin-6A + S-adenosyl-L-homocysteine. It functions in the pathway cofactor biosynthesis; adenosylcobalamin biosynthesis; cob(II)yrinate a,c-diamide from sirohydrochlorin (anaerobic route): step 6/10. In terms of biological role, catalyzes the methylation of C-1 in cobalt-precorrin-5B to form cobalt-precorrin-6A. The polypeptide is Cobalt-precorrin-5B C(1)-methyltransferase (Burkholderia vietnamiensis (strain G4 / LMG 22486) (Burkholderia cepacia (strain R1808))).